Reading from the N-terminus, the 500-residue chain is Pyoverdin chromophore biosynthetic protein PvcC (500 aa).

Requires FAD as cofactor.

It functions in the pathway siderophore biosynthesis; pyoverdin biosynthesis. The sequence is that of Pyoverdin chromophore biosynthetic protein PvcC (pvcC) from Pseudomonas aeruginosa (strain ATCC 15692 / DSM 22644 / CIP 104116 / JCM 14847 / LMG 12228 / 1C / PRS 101 / PAO1).